The following is a 345-amino-acid chain: S-adenosylmethionine:tRNA ribosyltransferase-isomerase (345 aa).

The protein belongs to the QueA family. Monomer.

The protein resides in the cytoplasm. The enzyme catalyses 7-aminomethyl-7-carbaguanosine(34) in tRNA + S-adenosyl-L-methionine = epoxyqueuosine(34) in tRNA + adenine + L-methionine + 2 H(+). It functions in the pathway tRNA modification; tRNA-queuosine biosynthesis. Functionally, transfers and isomerizes the ribose moiety from AdoMet to the 7-aminomethyl group of 7-deazaguanine (preQ1-tRNA) to give epoxyqueuosine (oQ-tRNA). In Shewanella pealeana (strain ATCC 700345 / ANG-SQ1), this protein is S-adenosylmethionine:tRNA ribosyltransferase-isomerase.